We begin with the raw amino-acid sequence, 193 residues long: Gas vesicle protein C (193 aa).

5 repeats span residues 19–51 (VAELSLETREFLSVTTAKRQEQAEKQAQELQAF), 52–84 (YKDLQETSQQFLSETAQARIAQAEKQAQELLAF), 85–117 (HKELQETSQQFLSATAQARIAQAEKQAQELLAF), 118–150 (YQEVRETSQQFLSATAQARIAQAEKQAQELLAF), and 151–183 (HKELQETSQQFLSATADARTAQAKEQKESLLKF). Positions 19–183 (VAELSLETRE…KEQKESLLKF (165 aa)) are 5 X 33 AA tandem repeats.

The protein belongs to the gas vesicle GvpC family.

The protein resides in the gas vesicle. In terms of biological role, confers stability, involved in shaping gas vesicles (GV), hollow, gas-filled proteinaceous nanostructures. During planktonic growth they allow positioning of the organism at a favorable depth for light or nutrient acquisition. The ratio of GvpA:GvpC is estimated to be 25:1. GvpC strengthens the GV wall, probably by connecting several GvpA proteins in the same and/or adjacent ribs. Removal of GvpC by SDS reduces the critical collapse pressure (CCP) of stored gas vesicles from 0.23 Mpa to 0.08 MPa. Removal of GvpC by urea reduces CCP of freshly isolated GVs from 0.550 MPa to 0.190 MPa; addition of recombinant GvpC restores CCP to 0.508 MPa. As the turgor pressure in this species is usually 0.35 MPa (plus the water column pressure in its growth environment), this protein is essential for GV formation. The protein is Gas vesicle protein C of Dolichospermum flosaquae (Anabaena flos-aquae).